Here is a 149-residue protein sequence, read N- to C-terminus: Large ribosomal subunit protein uL15 (149 aa).

The segment at 14 to 57 is disordered; that stretch reads KQRKRVGRGSGSGWGCTSGKGNKGQNARSGGGVRPGFEGGQMPL. Composition is skewed to gly residues over residues 21–35 and 42–52; these read RGSGSGWGCTSGKGN and SGGGVRPGFEG.

This sequence belongs to the universal ribosomal protein uL15 family. As to quaternary structure, part of the 50S ribosomal subunit.

Binds to the 23S rRNA. The polypeptide is Large ribosomal subunit protein uL15 (Oleidesulfovibrio alaskensis (strain ATCC BAA-1058 / DSM 17464 / G20) (Desulfovibrio alaskensis)).